The sequence spans 459 residues: FAD-dependent monooxygenase nanF (459 aa).

Glutamate 49, glycine 62, and arginine 121 together coordinate FAD. Active-site residues include arginine 200 and tyrosine 230. Residues aspartate 327 and glycine 340 each coordinate FAD.

This sequence belongs to the paxM FAD-dependent monooxygenase family. Requires FAD as cofactor.

Its pathway is secondary metabolite biosynthesis. In terms of biological role, FAD-dependent monooxygenase; part of the gene cluster that mediates the biosynthesis of the benzazepine alkaloid nanangelenin A which contains an unprecedented 3,4-dihydro-1-benzazepine-2,5-dione-N-prenyl-N-acetoxy-anthranilamide scaffold. The first step of nanangelenin biosynthesis is catalyzed by the indoleamine 2,3-dioxygenase nanC which produces N-formyl-kynurenine through the catabolism of tryptophan. The two-module NRPS nanA then utilizes anthranilate (Ant) and L-kynurenine (L-Kyn) to assemble the dipeptide product nanangelenin B. The first adenylation domain of nanA (A1) loads anthranilate onto the T1 domain, while A2 loads kynurenine, generated through spontaneous nonenzymatic deformylation of the nanC-supplied N-formyl-kynurenine. The peptide bond formation between the tethered amino acids is catalyzed by the first condensation domain (C1) between anthranilate's carbonyl carbon and kynurenine's aliphatic primary amine. The second C domain (C2) catalyzes the final cyclization event between the aromatic amine of kynurenine and the tethered carbonyl carbon, yielding nanangelenin B. The terminal T3 domain enhances the catalytic efficiency of C2, suggesting the T2-tethered Ant-L-Kyn is transferred to T3 prior to cyclization by C2. Once released from nanA, nanangelenin B is then prenylated by the prenyltransferase nanD to form nanangelenin C. Nanangelenin C is then N-hydroxylated by the FAD-dependent monooxygenase nanF and further acetylated by the acetyltransferase nanB to yield nanangelenin F. Finally, the N-methyltransferase nanE methylates the amide nitrogen of 1-benzazepine to convert nanangelenin F into nanangelenin A. NanE is also able to methylate most of the intermediates of the pathway such as nanangelenin B and nanangelenin C to produce nanangelenin D and nanangelenin E, respectively. In Aspergillus nanangensis, this protein is FAD-dependent monooxygenase nanF.